Consider the following 302-residue polypeptide: Bifunctional protein FolD 2 (302 aa).

Residues Gly-170–Ser-172, Ser-195, and Ile-236 each bind NADP(+).

The protein belongs to the tetrahydrofolate dehydrogenase/cyclohydrolase family. As to quaternary structure, homodimer.

The catalysed reaction is (6R)-5,10-methylene-5,6,7,8-tetrahydrofolate + NADP(+) = (6R)-5,10-methenyltetrahydrofolate + NADPH. It catalyses the reaction (6R)-5,10-methenyltetrahydrofolate + H2O = (6R)-10-formyltetrahydrofolate + H(+). It functions in the pathway one-carbon metabolism; tetrahydrofolate interconversion. Catalyzes the oxidation of 5,10-methylenetetrahydrofolate to 5,10-methenyltetrahydrofolate and then the hydrolysis of 5,10-methenyltetrahydrofolate to 10-formyltetrahydrofolate. The protein is Bifunctional protein FolD 2 of Paracoccus denitrificans (strain Pd 1222).